The primary structure comprises 245 residues: 1-(5-phosphoribosyl)-5-[(5-phosphoribosylamino)methylideneamino] imidazole-4-carboxamide isomerase (245 aa).

Aspartate 7 serves as the catalytic Proton acceptor. Residue aspartate 129 is the Proton donor of the active site.

It belongs to the HisA/HisF family.

The protein localises to the cytoplasm. It carries out the reaction 1-(5-phospho-beta-D-ribosyl)-5-[(5-phospho-beta-D-ribosylamino)methylideneamino]imidazole-4-carboxamide = 5-[(5-phospho-1-deoxy-D-ribulos-1-ylimino)methylamino]-1-(5-phospho-beta-D-ribosyl)imidazole-4-carboxamide. It functions in the pathway amino-acid biosynthesis; L-histidine biosynthesis; L-histidine from 5-phospho-alpha-D-ribose 1-diphosphate: step 4/9. This is 1-(5-phosphoribosyl)-5-[(5-phosphoribosylamino)methylideneamino] imidazole-4-carboxamide isomerase from Shewanella sp. (strain W3-18-1).